Here is a 129-residue protein sequence, read N- to C-terminus: Glycine cleavage system H protein (129 aa).

Positions 24–106 (SYTVGITEHA…YGEGWFFRVM (83 aa)) constitute a Lipoyl-binding domain. At Lys65 the chain carries N6-lipoyllysine.

Belongs to the GcvH family. As to quaternary structure, the glycine cleavage system is composed of four proteins: P, T, L and H. It depends on (R)-lipoate as a cofactor.

Its function is as follows. The glycine cleavage system catalyzes the degradation of glycine. The H protein shuttles the methylamine group of glycine from the P protein to the T protein. This is Glycine cleavage system H protein from Shewanella baltica (strain OS185).